We begin with the raw amino-acid sequence, 264 residues long: Probable transcriptional regulatory protein PPA1157 (264 aa).

The protein belongs to the TACO1 family.

Its subcellular location is the cytoplasm. The protein is Probable transcriptional regulatory protein PPA1157 of Cutibacterium acnes (strain DSM 16379 / KPA171202) (Propionibacterium acnes).